We begin with the raw amino-acid sequence, 693 residues long: TGF-beta-activated kinase 1 and MAP3K7-binding protein 2 (693 aa).

The 44-residue stretch at I8 to T51 folds into the CUE domain. The interval H90 to T171 is disordered. Polar residues-rich tracts occupy residues V97 to P130, P143 to P153, and K162 to T171. The residue at position 173 (R173) is an Asymmetric dimethylarginine. Polar residues predominate over residues S223–H282. The disordered stretch occupies residues S223–S310. The segment covering P286–S310 has biased composition (low complexity). K329 is covalently cross-linked (Glycyl lysine isopeptide (Lys-Gly) (interchain with G-Cter in SUMO)). The segment at L330–I380 is disordered. Over residues Q334 to T366 the composition is skewed to polar residues. S372, S450, S482, and S524 each carry phosphoserine. Positions Y532–R619 form a coiled coil. K562 is covalently cross-linked (Glycyl lysine isopeptide (Lys-Gly) (interchain with G-Cter in SUMO)). S582 bears the Phosphoserine mark. K611 participates in a covalent cross-link: Glycyl lysine isopeptide (Lys-Gly) (interchain with G-Cter in ubiquitin). The segment at P640 to E663 is disordered. Residues E663–F693 form a RanBP2-type zinc finger. An interaction with polyubiquitin region spans residues F675–E685.

Interacts with MAP3K7 and TRAF6. Identified in the TRIKA2 complex composed of MAP3K7, TAB1 and TAB2. Binds 'Lys-63'-linked polyubiquitin chains. Interacts with NCOR1 and HDAC3 to form a ternary complex. Interacts (via C-terminal) with NUMBL (via PTB domain). Interacts (via the C-terminus) with DYNC2I2 (via WD domains). Interacts with RBCK1. Interacts with TRIM5. Interacts with TRIM38 (via B30.2/SPRY domain), leading to its translocation to lysosomes and degradation. Interacts with ASB1; this interaction promotes TAB2 stability. In terms of processing, SUMOylated by TRIM60; leading to inhibition of MAPK/NF-kappaB activation and the innate immune response. Post-translationally, ubiquitinated; following IL1 stimulation or TRAF6 overexpression. Ubiquitination involves RBCK1 leading to proteasomal degradation. Ubiquitinated at Lys-611 by TRIM45 leading to proteasomal degradation. Degraded in a lysosome-dependent manner following interaction with TRIM38. In terms of processing, phosphorylated. Widely expressed.

Its subcellular location is the membrane. The protein localises to the endosome membrane. The protein resides in the lysosome membrane. It localises to the cytoplasm. It is found in the cytosol. Its subcellular location is the nucleus. Functionally, adapter required to activate the JNK and NF-kappa-B signaling pathways through the specific recognition of 'Lys-63'-linked polyubiquitin chains by its RanBP2-type zinc finger (NZF). Acts as an adapter linking MAP3K7/TAK1 and TRAF6 to 'Lys-63'-linked polyubiquitin chains. The RanBP2-type zinc finger (NZF) specifically recognizes Lys-63'-linked polyubiquitin chains unanchored or anchored to the substrate proteins such as RIPK1/RIP1 and RIPK2: this acts as a scaffold to organize a large signaling complex to promote autophosphorylation of MAP3K7/TAK1, and subsequent activation of I-kappa-B-kinase (IKK) core complex by MAP3K7/TAK1. Also recognizes and binds Lys-63'-linked polyubiquitin chains of heterotypic 'Lys-63'-/'Lys-48'-linked branched ubiquitin chains. Regulates the IL1-mediated translocation of NCOR1 out of the nucleus. Involved in heart development. The sequence is that of TGF-beta-activated kinase 1 and MAP3K7-binding protein 2 (Tab2) from Mus musculus (Mouse).